The sequence spans 169 residues: uncharacterized protein (169 aa).

The protein resides in the mitochondrion. This is an uncharacterized protein from Paramecium tetraurelia.